A 235-amino-acid chain; its full sequence is MESPIEKKPIIVAIDGPAASGKSTTAKILAARLGYTYIDTGAMYRSVTLKVLREGLLDEIRKDETRIAELLQTITIGFQGQRVFLDGEDVSEAIRENRVSREVSFISSLKPVRDKLRELQQEMGRKRGIVMDGRDIGTVIFPDAELKIFLIADPAERAKRRHAELLLKAGGAAVPSVEALEEEIKQRDRDDEQRTHAPLKRHPDAVLLDTSNMTIDEQVNVVYDLVNKIVEQQSL.

16-24 (GPAASGKST) serves as a coordination point for ATP.

This sequence belongs to the cytidylate kinase family. Type 1 subfamily.

The protein resides in the cytoplasm. It carries out the reaction CMP + ATP = CDP + ADP. The catalysed reaction is dCMP + ATP = dCDP + ADP. This is Cytidylate kinase from Chlorobaculum tepidum (strain ATCC 49652 / DSM 12025 / NBRC 103806 / TLS) (Chlorobium tepidum).